Here is an 887-residue protein sequence, read N- to C-terminus: Pyruvate dehydrogenase E1 component (887 aa).

As to quaternary structure, homodimer. Part of the PDH complex, consisting of multiple copies of pyruvate dehydrogenase (E1), dihydrolipoamide acetyltransferase (E2) and lipoamide dehydrogenase (E3). Thiamine diphosphate is required as a cofactor.

The enzyme catalyses N(6)-[(R)-lipoyl]-L-lysyl-[protein] + pyruvate + H(+) = N(6)-[(R)-S(8)-acetyldihydrolipoyl]-L-lysyl-[protein] + CO2. Functionally, component of the pyruvate dehydrogenase (PDH) complex, that catalyzes the overall conversion of pyruvate to acetyl-CoA and CO(2). This Buchnera aphidicola subsp. Baizongia pistaciae (strain Bp) protein is Pyruvate dehydrogenase E1 component (aceE).